A 435-amino-acid chain; its full sequence is Glutamyl-tRNA reductase (435 aa).

Residues threonine 50–arginine 53, serine 110, glutamate 115–glutamine 117, and glutamine 121 contribute to the substrate site. The active-site Nucleophile is cysteine 51. Residue glycine 191–glycine 196 coordinates NADP(+).

The protein belongs to the glutamyl-tRNA reductase family. As to quaternary structure, homodimer.

The enzyme catalyses (S)-4-amino-5-oxopentanoate + tRNA(Glu) + NADP(+) = L-glutamyl-tRNA(Glu) + NADPH + H(+). The protein operates within porphyrin-containing compound metabolism; protoporphyrin-IX biosynthesis; 5-aminolevulinate from L-glutamyl-tRNA(Glu): step 1/2. In terms of biological role, catalyzes the NADPH-dependent reduction of glutamyl-tRNA(Glu) to glutamate 1-semialdehyde (GSA). This Sulfurovum sp. (strain NBC37-1) protein is Glutamyl-tRNA reductase.